Here is a 149-residue protein sequence, read N- to C-terminus: Transcriptional repressor NrdR (149 aa).

The segment at 3 to 34 (CPFCFAVDTKVIDSRLVGEGSSVRRRRQCLVC) is a zinc-finger region. Residues 49–139 (PRVVKSNDVR…VYRSFEDIKE (91 aa)) enclose the ATP-cone domain.

Belongs to the NrdR family. Zn(2+) serves as cofactor.

Negatively regulates transcription of bacterial ribonucleotide reductase nrd genes and operons by binding to NrdR-boxes. In Escherichia fergusonii (strain ATCC 35469 / DSM 13698 / CCUG 18766 / IAM 14443 / JCM 21226 / LMG 7866 / NBRC 102419 / NCTC 12128 / CDC 0568-73), this protein is Transcriptional repressor NrdR.